Reading from the N-terminus, the 462-residue chain is Elongation factor 1-alpha 1 (462 aa).

Gly2 is subject to N,N,N-trimethylglycine. The tr-type G domain maps to 5–242; it reads KTHINIVVIG…DCILPPTRPT (238 aa). Residues 14-21 form a G1 region; it reads GHVDSGKS. A GTP-binding site is contributed by 14–21; the sequence is GHVDSGKS. The G2 stretch occupies residues 70–74; it reads GITID. A G3 region spans residues 91 to 94; it reads DAPG. Residues 153 to 156 and 194 to 196 contribute to the GTP site; these read NKMD and SGW. Positions 153 to 156 are G4; sequence NKMD. The segment at 194-196 is G5; it reads SGW. Glu301 and Glu374 each carry 5-glutamyl glycerylphosphorylethanolamine.

Belongs to the TRAFAC class translation factor GTPase superfamily. Classic translation factor GTPase family. EF-Tu/EF-1A subfamily.

It localises to the cytoplasm. It catalyses the reaction GTP + H2O = GDP + phosphate + H(+). Functionally, translation elongation factor that catalyzes the GTP-dependent binding of aminoacyl-tRNA (aa-tRNA) to the A-site of ribosomes during the elongation phase of protein synthesis. Base pairing between the mRNA codon and the aa-tRNA anticodon promotes GTP hydrolysis, releasing the aa-tRNA from EEF1A1 and allowing its accommodation into the ribosome. The growing protein chain is subsequently transferred from the P-site peptidyl tRNA to the A-site aa-tRNA, extending it by one amino acid through ribosome-catalyzed peptide bond formation. The polypeptide is Elongation factor 1-alpha 1 (EEF1A) (Gallus gallus (Chicken)).